A 309-amino-acid polypeptide reads, in one-letter code: Ribosomal RNA large subunit methyltransferase F (309 aa).

It belongs to the methyltransferase superfamily. METTL16/RlmF family.

The protein localises to the cytoplasm. The catalysed reaction is adenosine(1618) in 23S rRNA + S-adenosyl-L-methionine = N(6)-methyladenosine(1618) in 23S rRNA + S-adenosyl-L-homocysteine + H(+). Specifically methylates the adenine in position 1618 of 23S rRNA. The protein is Ribosomal RNA large subunit methyltransferase F of Cronobacter sakazakii (strain ATCC BAA-894) (Enterobacter sakazakii).